A 373-amino-acid polypeptide reads, in one-letter code: Phosphoserine aminotransferase (373 aa).

Arg-47 is an L-glutamate binding site. Pyridoxal 5'-phosphate-binding positions include 81–82 (AR), Trp-113, Thr-164, Asp-185, and Gln-208. N6-(pyridoxal phosphate)lysine is present on Lys-209. Position 250–251 (250–251 (NT)) interacts with pyridoxal 5'-phosphate.

It belongs to the class-V pyridoxal-phosphate-dependent aminotransferase family. SerC subfamily. As to quaternary structure, homodimer. It depends on pyridoxal 5'-phosphate as a cofactor.

It localises to the cytoplasm. It catalyses the reaction O-phospho-L-serine + 2-oxoglutarate = 3-phosphooxypyruvate + L-glutamate. The enzyme catalyses 4-(phosphooxy)-L-threonine + 2-oxoglutarate = (R)-3-hydroxy-2-oxo-4-phosphooxybutanoate + L-glutamate. It functions in the pathway amino-acid biosynthesis; L-serine biosynthesis; L-serine from 3-phospho-D-glycerate: step 2/3. Its pathway is cofactor biosynthesis; pyridoxine 5'-phosphate biosynthesis; pyridoxine 5'-phosphate from D-erythrose 4-phosphate: step 3/5. Functionally, catalyzes the reversible conversion of 3-phosphohydroxypyruvate to phosphoserine and of 3-hydroxy-2-oxo-4-phosphonooxybutanoate to phosphohydroxythreonine. This chain is Phosphoserine aminotransferase, found in Buchnera aphidicola subsp. Baizongia pistaciae (strain Bp).